A 101-amino-acid chain; its full sequence is uncharacterized protein (101 aa).

The disordered stretch occupies residues 76–101 (KGNVTRRRKKTHLGNDDGKKEAQEKM). Over residues 88–101 (LGNDDGKKEAQEKM) the composition is skewed to basic and acidic residues.

This is an uncharacterized protein from Homo sapiens (Human).